The following is a 400-amino-acid chain: Argininosuccinate synthase (400 aa).

Residue 8–16 (AYSGGLDTS) participates in ATP binding. Residues tyrosine 87 and serine 92 each coordinate L-citrulline. An ATP-binding site is contributed by glycine 117. L-aspartate is bound by residues threonine 119, asparagine 123, and aspartate 124. Residue asparagine 123 participates in L-citrulline binding. 4 residues coordinate L-citrulline: arginine 127, serine 175, glutamate 259, and tyrosine 271.

Belongs to the argininosuccinate synthase family. Type 1 subfamily. As to quaternary structure, homotetramer.

Its subcellular location is the cytoplasm. It carries out the reaction L-citrulline + L-aspartate + ATP = 2-(N(omega)-L-arginino)succinate + AMP + diphosphate + H(+). It participates in amino-acid biosynthesis; L-arginine biosynthesis; L-arginine from L-ornithine and carbamoyl phosphate: step 2/3. This is Argininosuccinate synthase from Frankia alni (strain DSM 45986 / CECT 9034 / ACN14a).